A 182-amino-acid chain; its full sequence is uncharacterized protein (182 aa).

Positions 66-133 form a coiled coil; sequence QKRKRREIKV…NLEIETNSDS (68 aa).

This is an uncharacterized protein from Acanthamoeba polyphaga (Amoeba).